Consider the following 127-residue polypeptide: Large ribosomal subunit protein bL17 (127 aa).

The protein belongs to the bacterial ribosomal protein bL17 family. Part of the 50S ribosomal subunit. Contacts protein L32.

The sequence is that of Large ribosomal subunit protein bL17 from Leuconostoc mesenteroides subsp. mesenteroides (strain ATCC 8293 / DSM 20343 / BCRC 11652 / CCM 1803 / JCM 6124 / NCDO 523 / NBRC 100496 / NCIMB 8023 / NCTC 12954 / NRRL B-1118 / 37Y).